The following is a 385-amino-acid chain: 8-amino-7-oxononanoate synthase (385 aa).

R21 lines the substrate pocket. 108-109 (GF) serves as a coordination point for pyridoxal 5'-phosphate. H133 is a substrate binding site. S179, H207, and T233 together coordinate pyridoxal 5'-phosphate. K236 carries the post-translational modification N6-(pyridoxal phosphate)lysine. T352 lines the substrate pocket.

The protein belongs to the class-II pyridoxal-phosphate-dependent aminotransferase family. BioF subfamily. As to quaternary structure, homodimer. Pyridoxal 5'-phosphate serves as cofactor.

It carries out the reaction 6-carboxyhexanoyl-[ACP] + L-alanine + H(+) = (8S)-8-amino-7-oxononanoate + holo-[ACP] + CO2. Its pathway is cofactor biosynthesis; biotin biosynthesis. Its function is as follows. Catalyzes the decarboxylative condensation of pimeloyl-[acyl-carrier protein] and L-alanine to produce 8-amino-7-oxononanoate (AON), [acyl-carrier protein], and carbon dioxide. In Klebsiella pneumoniae (strain 342), this protein is 8-amino-7-oxononanoate synthase.